We begin with the raw amino-acid sequence, 242 residues long: MVTVREEIRKGPWTEQEDLQLVCTVRLFGERRWDFIAKVSGLNRTGKSCRLRWVNYLHPGLKRGRMSPHEERLILELHARWGNRWSRIARRLPGRTDNEIKNYWRTHMRKKAQERKSNMSPSSSSSSLTYQSCHPETPSMIIGIEEQELHGGSGCITSIMKSTPVDMDGYPMDQIWMEIEAPNVLPGPCFDEAKDSASNSLSGPLLPYPMWDYYCPETCLRMDDEIKVAPQFGYGKGVGPCY.

HTH myb-type domains follow at residues 5 to 61 and 62 to 112; these read REEI…HPGL and KRGR…RKKA. Residues 33–57 constitute a DNA-binding region (H-T-H motif); that stretch reads WDFIAKVSGLNRTGKSCRLRWVNYL. Residues 62–65 carry the Bipartite nuclear localization signal 1 motif; it reads KRGR. Positions 85 to 108 form a DNA-binding region, H-T-H motif; the sequence is WSRIARRLPGRTDNEIKNYWRTHM. Positions 109 to 117 match the Bipartite nuclear localization signal 2 motif; it reads RKKAQERKS. The segment at 110 to 133 is disordered; that stretch reads KKAQERKSNMSPSSSSSSLTYQSC. Over residues 118–133 the composition is skewed to low complexity; that stretch reads NMSPSSSSSSLTYQSC.

Its subcellular location is the nucleus. In terms of biological role, transcription factor. The chain is Myb-related protein MYBAS2 (MYBAS2) from Oryza sativa subsp. japonica (Rice).